The sequence spans 192 residues: Adenylate kinase (192 aa).

ATP is bound at residue 10 to 18; the sequence is GVPGVGGTT.

This sequence belongs to the archaeal adenylate kinase family. Monomer.

The protein localises to the cytoplasm. The catalysed reaction is AMP + ATP = 2 ADP. The protein is Adenylate kinase of Methanococcus maripaludis (strain C6 / ATCC BAA-1332).